The sequence spans 182 residues: Adenine phosphoribosyltransferase (182 aa).

It belongs to the purine/pyrimidine phosphoribosyltransferase family. Homodimer.

Its subcellular location is the cytoplasm. The catalysed reaction is AMP + diphosphate = 5-phospho-alpha-D-ribose 1-diphosphate + adenine. Its pathway is purine metabolism; AMP biosynthesis via salvage pathway; AMP from adenine: step 1/1. Catalyzes a salvage reaction resulting in the formation of AMP, that is energically less costly than de novo synthesis. The sequence is that of Adenine phosphoribosyltransferase from Bordetella avium (strain 197N).